A 368-amino-acid chain; its full sequence is Phosphate acyltransferase (368 aa).

The interval 337–368 is disordered; sequence LGEGEHNAGGAGHASPAAGHHAEPSAAQSSKA. Residues 349–368 show a composition bias toward low complexity; sequence HASPAAGHHAEPSAAQSSKA.

Belongs to the PlsX family. As to quaternary structure, homodimer. Probably interacts with PlsY.

It localises to the cytoplasm. It catalyses the reaction a fatty acyl-[ACP] + phosphate = an acyl phosphate + holo-[ACP]. The protein operates within lipid metabolism; phospholipid metabolism. Catalyzes the reversible formation of acyl-phosphate (acyl-PO(4)) from acyl-[acyl-carrier-protein] (acyl-ACP). This enzyme utilizes acyl-ACP as fatty acyl donor, but not acyl-CoA. This is Phosphate acyltransferase from Burkholderia lata (strain ATCC 17760 / DSM 23089 / LMG 22485 / NCIMB 9086 / R18194 / 383).